Consider the following 210-residue polypeptide: Prolactin (210 aa).

An N-terminal signal peptide occupies residues 1 to 23 (MTQGSRLYFAVAVLMCGFVSING). Disulfide bonds link cysteine 69–cysteine 183 and cysteine 200–cysteine 210.

This sequence belongs to the somatotropin/prolactin family. As to expression, pituitary gland.

It localises to the secreted. The sequence is that of Prolactin (prl1) from Carassius auratus (Goldfish).